Here is a 1156-residue protein sequence, read N- to C-terminus: Pesticidal crystal protein Cry9Aa (1156 aa).

Residues 1–23 (MNQNKHGIIGASNCGCASDDVAK) constitute a propeptide, removed in mature form.

It belongs to the delta endotoxin family.

Promotes colloidosmotic lysis by binding to the midgut epithelial cells of insects. This protein is toxic to Galleria mellonella. The protein is Pesticidal crystal protein Cry9Aa (cry9Aa) of Bacillus thuringiensis subsp. galleriae.